The chain runs to 336 residues: Alpha-N-acetylgalactosaminide alpha-2,6-sialyltransferase 5 (336 aa).

At 1 to 8 (MKTLMRHG) the chain is on the cytoplasmic side. Residues 9-29 (LAVCLVLTTMCTSLLLVYSSL) form a helical; Signal-anchor for type II membrane protein membrane-spanning segment. Over 30 to 336 (GSQKERPPQQ…VNHAEGKPVF (307 aa)) the chain is Lumenal. Residues 34-76 (ERPPQQQQQQQQQQQQAATATGSTQLVESSPQPRRTAPAGPRQ) are disordered. Positions 38-49 (QQQQQQQQQQQQ) are enriched in low complexity. Positions 50–66 (AATATGSTQLVESSPQP) are enriched in polar residues. Cysteines 96 and 245 form a disulfide. 2 N-linked (GlcNAc...) asparagine glycosylation sites follow: asparagine 137 and asparagine 161.

The protein belongs to the glycosyltransferase 29 family. High expression in forebrain and to a lesser extent in cerebellum. No expression in salivary gland, intestine, liver, kidney, heart, lung, thymus and spleen.

It is found in the golgi apparatus membrane. It catalyses the reaction a ganglioside GM1b (d18:1(4E)) + CMP-N-acetyl-beta-neuraminate = a ganglioside GD1alpha (d18:1(4E)) + CMP + H(+). The enzyme catalyses N-acetyl-alpha-neuraminosyl-(2-&gt;3)-beta-D-galactosyl-(1-&gt;3)-N-acetyl-beta-D-glucosaminyl-(1-&gt;3)-beta-D-galactosyl-(1-&gt;4)-beta-D-glucosyl-(1&lt;-&gt;1')-N-acyl-sphing-4-enine + CMP-N-acetyl-beta-neuraminate = N-acetyl-alpha-neuraminosyl-(2-&gt;3)-beta-D-galactosyl-(1-&gt;3)-[N-acetyl-alpha-neuraminosyl-(2-&gt;6)]-N-acetyl-beta-D-glucosaminyl-(1-&gt;3)-beta-D-galactosyl-(1-&gt;4)-beta-D-glucosyl-(1&lt;-&gt;1')-N-acyl-sphing-4-enine + CMP + H(+). The protein operates within glycolipid biosynthesis. In terms of biological role, predominantly catalyzes the biosynthesis of ganglioside GD1alpha from GM1b in the brain, by transferring the sialyl group (N-acetyl-alpha-neuraminyl or NeuAc) from CMP-NeuAc to the GalNAc residue on the NeuAc-alpha-2,3-Gal-beta-1,3-GalNAc sequence of GM1b. GD1alpha is a critical molecule in the communication and interaction between neuronal cells and their supportive cells, particularly in brain tissues, and functions as an adhesion molecule in the process of metastasis. Also shows activity towards sialyl Lc4Cer (N-acetyl-alpha-neuraminosyl-(2-&gt;3)-beta-D-galactosyl-(1-&gt;3)-N-acetyl-beta-D-glucosaminyl-(1-&gt;3)-beta-D-galactosyl-(1-&gt;4)-beta-D-glucosyl-(1&lt;-&gt;1')-N-acyl-sphing-4-enine) generating disialyl Lc4Cer, which can lead to the synthesis of disialyl Lewis a (Le(a)), suggested to be a cancer-associated antigen. The sequence is that of Alpha-N-acetylgalactosaminide alpha-2,6-sialyltransferase 5 (St6galnac5) from Mus musculus (Mouse).